A 444-amino-acid polypeptide reads, in one-letter code: Zeaxanthin 4-ketolase (444 aa).

The interval 408–444 (VAGGSSSGGGGEGGKPGAGEHGLLQRQRQLAPVGVMA) is disordered. Positions 412-427 (SSSGGGGEGGKPGAGE) are enriched in gly residues.

The catalysed reaction is all-trans-adonixanthin + 2 AH2 + 2 O2 = all-trans-(3S,3'S)-astaxanthin + 2 A + 3 H2O. The enzyme catalyses all-trans-zeaxanthin + 2 AH2 + 2 O2 = all-trans-adonixanthin + 2 A + 3 H2O. It carries out the reaction echinenone + 2 AH2 + 2 O2 = canthaxanthin + 2 A + 3 H2O. It catalyses the reaction all-trans-beta-carotene + 2 AH2 + 2 O2 = echinenone + 2 A + 3 H2O. It participates in carotenoid biosynthesis; astaxanthin biosynthesis. Involved in the biosynthesis of ketocarotenoids which are powerful anti-oxidative molecules. Catalyzes the conversion of zeaxanthin to astaxanthin via adonixanthin. Catalyzes the conversion of beta-carotene to canthaxanthin via echinenone. The sequence is that of Zeaxanthin 4-ketolase from Chlamydomonas reinhardtii (Chlamydomonas smithii).